Here is an 878-residue protein sequence, read N- to C-terminus: Leucine--tRNA ligase (878 aa).

The 'HIGH' region signature appears at 43–53 (PYPSGRIHIGH). Positions 630 to 634 (KMSKS) match the 'KMSKS' region motif. Lys-633 is a binding site for ATP.

This sequence belongs to the class-I aminoacyl-tRNA synthetase family.

It localises to the cytoplasm. The catalysed reaction is tRNA(Leu) + L-leucine + ATP = L-leucyl-tRNA(Leu) + AMP + diphosphate. The sequence is that of Leucine--tRNA ligase from Nitrobacter hamburgensis (strain DSM 10229 / NCIMB 13809 / X14).